The chain runs to 497 residues: Methionine--tRNA ligase (497 aa).

The 'HIGH' region motif lies at 14–24 (YYVNDVPHLGH). Positions 129, 132, 147, and 150 each coordinate Zn(2+). The 'KMSKS' region signature appears at 295–299 (KMSKT). ATP is bound at residue K298.

This sequence belongs to the class-I aminoacyl-tRNA synthetase family. MetG type 2A subfamily. Monomer. The cofactor is Zn(2+).

The protein localises to the cytoplasm. The enzyme catalyses tRNA(Met) + L-methionine + ATP = L-methionyl-tRNA(Met) + AMP + diphosphate. Is required not only for elongation of protein synthesis but also for the initiation of all mRNA translation through initiator tRNA(fMet) aminoacylation. This Aquifex aeolicus (strain VF5) protein is Methionine--tRNA ligase (metG).